The chain runs to 352 residues: Protein-glutamate methylesterase/protein-glutamine glutaminase (352 aa).

In terms of domain architecture, Response regulatory spans 5-122 (RAIVIDDSAF…SLDIRNVEDE (118 aa)). D56 is subject to 4-aspartylphosphate. In terms of domain architecture, CheB-type methylesterase spans 163–352 (RSIVSIGTST…IPSLIVKQLT (190 aa)). Catalysis depends on residues S171, H198, and D294.

The protein belongs to the CheB family. Phosphorylated by CheA. Phosphorylation of the N-terminal regulatory domain activates the methylesterase activity.

It localises to the cytoplasm. It catalyses the reaction [protein]-L-glutamate 5-O-methyl ester + H2O = L-glutamyl-[protein] + methanol + H(+). The catalysed reaction is L-glutaminyl-[protein] + H2O = L-glutamyl-[protein] + NH4(+). Functionally, involved in chemotaxis. Part of a chemotaxis signal transduction system that modulates chemotaxis in response to various stimuli. Catalyzes the demethylation of specific methylglutamate residues introduced into the chemoreceptors (methyl-accepting chemotaxis proteins or MCP) by CheR. Also mediates the irreversible deamidation of specific glutamine residues to glutamic acid. This is Protein-glutamate methylesterase/protein-glutamine glutaminase from Oceanobacillus iheyensis (strain DSM 14371 / CIP 107618 / JCM 11309 / KCTC 3954 / HTE831).